The primary structure comprises 231 residues: Large ribosomal subunit protein uL1 (231 aa).

It belongs to the universal ribosomal protein uL1 family. In terms of assembly, part of the 50S ribosomal subunit.

Functionally, binds directly to 23S rRNA. The L1 stalk is quite mobile in the ribosome, and is involved in E site tRNA release. In terms of biological role, protein L1 is also a translational repressor protein, it controls the translation of the L11 operon by binding to its mRNA. This is Large ribosomal subunit protein uL1 from Caldanaerobacter subterraneus subsp. tengcongensis (strain DSM 15242 / JCM 11007 / NBRC 100824 / MB4) (Thermoanaerobacter tengcongensis).